We begin with the raw amino-acid sequence, 461 residues long: ADP-specific phosphofructokinase (461 aa).

The ADPK domain occupies 1-457 (MVRELLEKAR…FASYLAMLKE (457 aa)). Residues E268, E298, and D441 each coordinate Mg(2+). D441 acts as the Proton acceptor in catalysis.

It belongs to the carbohydrate kinase PfkC family. Mg(2+) is required as a cofactor.

It is found in the cytoplasm. The catalysed reaction is beta-D-fructose 6-phosphate + ADP = beta-D-fructose 1,6-bisphosphate + AMP + H(+). It participates in carbohydrate degradation; glycolysis. Catalyzes the phosphorylation of fructose 6-phosphate to fructose 1,6-bisphosphate using ADP as the phosphate donor. The polypeptide is ADP-specific phosphofructokinase (Thermococcus zilligii).